Consider the following 360-residue polypeptide: Phosphoserine aminotransferase (360 aa).

Arginine 42 is a binding site for L-glutamate. Pyridoxal 5'-phosphate contacts are provided by residues 76–77, tryptophan 102, threonine 153, aspartate 172, and glutamine 195; that span reads AR. Lysine 196 is subject to N6-(pyridoxal phosphate)lysine. 237 to 238 lines the pyridoxal 5'-phosphate pocket; sequence NT.

Belongs to the class-V pyridoxal-phosphate-dependent aminotransferase family. SerC subfamily. In terms of assembly, homodimer. Pyridoxal 5'-phosphate is required as a cofactor.

It localises to the cytoplasm. The enzyme catalyses O-phospho-L-serine + 2-oxoglutarate = 3-phosphooxypyruvate + L-glutamate. It carries out the reaction 4-(phosphooxy)-L-threonine + 2-oxoglutarate = (R)-3-hydroxy-2-oxo-4-phosphooxybutanoate + L-glutamate. Its pathway is amino-acid biosynthesis; L-serine biosynthesis; L-serine from 3-phospho-D-glycerate: step 2/3. It functions in the pathway cofactor biosynthesis; pyridoxine 5'-phosphate biosynthesis; pyridoxine 5'-phosphate from D-erythrose 4-phosphate: step 3/5. Its function is as follows. Catalyzes the reversible conversion of 3-phosphohydroxypyruvate to phosphoserine and of 3-hydroxy-2-oxo-4-phosphonooxybutanoate to phosphohydroxythreonine. The protein is Phosphoserine aminotransferase of Photobacterium profundum (strain SS9).